Reading from the N-terminus, the 89-residue chain is UPF0335 protein RPE_4107 (89 aa).

This sequence belongs to the UPF0335 family.

In Rhodopseudomonas palustris (strain BisA53), this protein is UPF0335 protein RPE_4107.